The chain runs to 306 residues: Methionyl-tRNA formyltransferase (306 aa).

S109–P112 lines the (6S)-5,6,7,8-tetrahydrofolate pocket.

Belongs to the Fmt family.

It catalyses the reaction L-methionyl-tRNA(fMet) + (6R)-10-formyltetrahydrofolate = N-formyl-L-methionyl-tRNA(fMet) + (6S)-5,6,7,8-tetrahydrofolate + H(+). Its function is as follows. Attaches a formyl group to the free amino group of methionyl-tRNA(fMet). The formyl group appears to play a dual role in the initiator identity of N-formylmethionyl-tRNA by promoting its recognition by IF2 and preventing the misappropriation of this tRNA by the elongation apparatus. This chain is Methionyl-tRNA formyltransferase, found in Herpetosiphon aurantiacus (strain ATCC 23779 / DSM 785 / 114-95).